A 1139-amino-acid chain; its full sequence is Solute carrier family 12 member 5 (1139 aa).

Disordered regions lie at residues 1–62 and 95–116; these read MSRR…KGRE and PQGSKEHEEAENNEGGKKKPVQ. The Cytoplasmic portion of the chain corresponds to 1 to 98; that stretch reads MSRRFTVTSL…ANYTNLPQGS (98 aa). Residues 21-45 are compositionally biased toward basic and acidic residues; it reads PESRRHSVADPRRLPREDVKGDGNP. The span at 46 to 55 shows a compositional bias: polar residues; that stretch reads KESSPFINST. Residue T57 is modified to Phosphothreonine. Over residues 98 to 111 the composition is skewed to basic and acidic residues; the sequence is SKEHEEAENNEGGK. The discontinuously helical transmembrane segment at 99-120 threads the bilayer; sequence KEHEEAENNEGGKKKPVQAPRM. Position 113 (K113) interacts with K(+). At 121–129 the chain is on the extracellular side; the sequence is GTFMGVYLP. Residues 130 to 151 form a helical membrane-spanning segment; the sequence is CLQNIFGVILFLRLTWVVGIAG. Residues 152–174 are Cytoplasmic-facing; that stretch reads IMESFCMVFICCSCTMLTAISMS. A helical transmembrane segment spans residues 175–203; the sequence is AIATNGVVPAGGSYYMISRSLGPEFGGAV. Residue A184 participates in chloride binding. Residues 204–229 are Extracellular-facing; that stretch reads GLCFYLGTTFAGAMYILGTIEILLAY. The next 2 helical transmembrane spans lie at 230–250 and 251–276; these read LFPAMAIFKAEDASGEAAAML and NNMRVYGTCVLTCMATVVFVGVKYVN. Residues 277-402 are Extracellular-facing; the sequence is KFALVFLGCV…ERRGMPSVGL (126 aa). The cysteines at positions 310 and 325 are disulfide-linked. N314, N333, N351, and N362 each carry an N-linked (GlcNAc...) asparagine glycan. C345 and C354 are oxidised to a cystine. Residues 403-420 traverse the membrane as a helical segment; sequence ADGTPVDMDHPYVFSDMT. M410 is a K(+) binding site. Chloride is bound by residues Y414 and V415. Over 421–429 the chain is Cytoplasmic; it reads SYFTLLVGI. A helical membrane pass occupies residues 430-453; that stretch reads YFPSVTGIMAGSNRSGDLRDAQKS. K(+) is bound at residue D446. The Extracellular segment spans residues 454-485; that stretch reads IPTGTILAIATTSAVYISSVVLFGACIEGVVL. Residues 486–513 traverse the membrane as a helical segment; it reads RDKFGEAVNGNLVVGTLAWPSPWVIVIG. Residues 514–534 are Cytoplasmic-facing; that stretch reads SFFSTCGAGLQSLTGAPRLLQ. 2 helical membrane passes run 535–555 and 556–578; these read AISRDGIVPFLQVFGHGKANG and EPTWALLLTACICEIGILIASLD. E569 is a binding site for chloride. The Cytoplasmic portion of the chain corresponds to 579–592; it reads EVAPILSMFFLMCY. The next 2 helical transmembrane spans lie at 593-615 and 616-632; these read MFVNLACAVQTLLRTPNWRPRFR and YYHWTLSFLGMSLCLAL. Residues 633–1139 lie on the Cytoplasmic side of the membrane; that stretch reads MFICSWYYAL…GGREVITIYS (507 aa). The tract at residues 667-681 is scissor helix; sequence GIRGLSLSAARYALL. T929 bears the Phosphothreonine; by OXSR1 and STK39 mark. Positions 943–1025 are disordered; that stretch reads HLTKNERERE…PEGEGETDPE (83 aa). A compositionally biased stretch (basic and acidic residues) spans 945–962; that stretch reads TKNEREREIQSITDESRG. A compositionally biased stretch (acidic residues) spans 982 to 994; sequence TACDNEEKPEEEV. The segment covering 1003–1012 has biased composition (low complexity); that stretch reads PSCPSSSPSP. Phosphothreonine; by OXSR1 and STK39 is present on T1030. Positions 1033-1052 are disordered; the sequence is KDKSAAQKNKGPSPVSSEGI. S1045, S1048, and S1049 each carry phosphoserine.

This sequence belongs to the SLC12A transporter family. K/Cl co-transporter subfamily. Homodimer; adopts a domain-swap conformation at the scissor helices connecting the transmembrane domain and C-terminal domain. Heterodimer wHeterodimer with K-Cl cotransporters SLC12A6 and SLC12A7. Interacts with AP2A1. Post-translationally, phosphorylated at Thr-929 and Thr-1030 by OXSR1/OSR1 and STK39/SPAK downstream of WNK kinases (WNK1, WNK2, WNK3 or WNK4), inhibiting the potassium-chloride cotransport activity. In terms of tissue distribution, highly expressed in brain. Not detected in other tissues. Highly expressed in pyramidal neurons and in neurons throughout the cortex, hippocampus, the granular layer of the cerebellum and in groups of neurons throughout the brainstem. Barely detectable in dorsal-root ganglions.

Its subcellular location is the cell membrane. It localises to the cell projection. It is found in the dendrite. It carries out the reaction K(+)(in) + chloride(in) = K(+)(out) + chloride(out). Its activity is regulated as follows. Inhibited following phosphorylation by OXSR1/OSR1 and STK39/SPAK: phosphorylation takes place downstream of WNK kinases (WNK1, WNK2, WNK3 or WNK4) in response to hyperosmotic stress and subsequent cell shrinkage. In terms of biological role, mediates electroneutral potassium-chloride cotransport in mature neurons and is required for neuronal Cl(-) homeostasis. As major extruder of intracellular chloride, it establishes the low neuronal Cl(-) levels required for chloride influx after binding of GABA-A and glycine to their receptors, with subsequent hyperpolarization and neuronal inhibition. Involved in the regulation of dendritic spine formation and maturation. This is Solute carrier family 12 member 5 (Slc12a5) from Rattus norvegicus (Rat).